Reading from the N-terminus, the 205-residue chain is Probable molybdenum cofactor guanylyltransferase (205 aa).

GTP-binding positions include 10–12 (LAG), lysine 22, aspartate 69, and aspartate 100. Aspartate 100 provides a ligand contact to Mg(2+).

This sequence belongs to the MobA family. Requires Mg(2+) as cofactor.

It localises to the cytoplasm. The catalysed reaction is Mo-molybdopterin + GTP + H(+) = Mo-molybdopterin guanine dinucleotide + diphosphate. In terms of biological role, transfers a GMP moiety from GTP to Mo-molybdopterin (Mo-MPT) cofactor (Moco or molybdenum cofactor) to form Mo-molybdopterin guanine dinucleotide (Mo-MGD) cofactor. The protein is Probable molybdenum cofactor guanylyltransferase of Natranaerobius thermophilus (strain ATCC BAA-1301 / DSM 18059 / JW/NM-WN-LF).